A 226-amino-acid polypeptide reads, in one-letter code: Protein YOP1 homolog (226 aa).

The tract at residues 1 to 25 is disordered; sequence MRMSKLYKNKEKENEKPSNEPPIKQ. Topologically, residues 1–72 are cytoplasmic; that stretch reads MRMSKLYKNK…IEFGYKLGIK (72 aa). The span at 8–18 shows a compositional bias: basic and acidic residues; sequence KNKEKENEKPS. A helical transmembrane segment spans residues 73–92; sequence PSYIVVFGGSALFISLVLGW. Over 93–94 the chain is Lumenal; it reads GA. A helical transmembrane segment spans residues 95-113; it reads ALICNLVGFAYPAYQSFKA. Topologically, residues 114 to 123 are cytoplasmic; it reads VESQGHAETK. Residues 124-140 form a helical membrane-spanning segment; the sequence is LWLTYWVVFSLFFFIEY. Topologically, residues 141–143 are lumenal; the sequence is LID. The helical transmembrane segment at 144-162 threads the bilayer; the sequence is IILFWIPFYYVIKLLFLLY. Residues 163–226 lie on the Cytoplasmic side of the membrane; sequence LYMPQVRGAE…VQEGVRRRNV (64 aa).

The protein belongs to the DP1 family. In terms of assembly, may form oligomers.

The protein localises to the endoplasmic reticulum membrane. Its function is as follows. Required to generate and maintain the structure of the tubular endoplasmic reticulum network and the digestive (food) vacuole. Induces high curvature in membranes and causes membrane tubule formation. The protein is Protein YOP1 homolog of Plasmodium berghei (strain Anka).